A 276-amino-acid chain; its full sequence is Sulfur carrier protein FdhD (276 aa).

The active-site Cysteine persulfide intermediate is the C118.

It belongs to the FdhD family.

Its subcellular location is the cytoplasm. Functionally, required for formate dehydrogenase (FDH) activity. Acts as a sulfur carrier protein that transfers sulfur from IscS to the molybdenum cofactor prior to its insertion into FDH. The sequence is that of Sulfur carrier protein FdhD from Mycobacterium bovis (strain ATCC BAA-935 / AF2122/97).